The chain runs to 356 residues: Probable scoulerine-9-O-methyltransferase OMT2B (356 aa).

Residue Met-173 participates in S-adenosyl-L-methionine binding. Asp-176 is a substrate binding site. Residues Thr-177, Gly-202, Asp-225, 245-246 (DI), and Lys-259 contribute to the S-adenosyl-L-methionine site. 260 to 264 (YVLHN) lines the substrate pocket. His-263 acts as the Proton acceptor in catalysis.

This sequence belongs to the class I-like SAM-binding methyltransferase superfamily. Cation-independent O-methyltransferase family. COMT subfamily.

It carries out the reaction (S)-scoulerine + S-adenosyl-L-methionine = (S)-tetrahydrocolumbamine + S-adenosyl-L-homocysteine + H(+). It functions in the pathway alkaloid biosynthesis. Functionally, methyltransferase involved in the biosynthesis of the benzylisoquinoline alkaloid noscapine. Catalyzes the conversion of (S)-scoulerine to (S)-tetrahydrocolumbamine. The heterodimers OMT2B-SOMT3 and OMT2B-6OMT do not possess 3-O-acetyl-4'-O-demethylpapaveroxine 4'-O-methyltransferase activity. The polypeptide is Probable scoulerine-9-O-methyltransferase OMT2B (Papaver somniferum (Opium poppy)).